A 29-amino-acid chain; its full sequence is Cytochrome b6-f complex subunit 8 (29 aa).

Residues 3-23 (IVSIAWAALMVVFTFSLSLVV) form a helical membrane-spanning segment.

The protein belongs to the PetN family. In terms of assembly, the 4 large subunits of the cytochrome b6-f complex are cytochrome b6, subunit IV (17 kDa polypeptide, PetD), cytochrome f and the Rieske protein, while the 4 small subunits are PetG, PetL, PetM and PetN. The complex functions as a dimer.

It localises to the plastid. The protein localises to the chloroplast thylakoid membrane. Functionally, component of the cytochrome b6-f complex, which mediates electron transfer between photosystem II (PSII) and photosystem I (PSI), cyclic electron flow around PSI, and state transitions. This Angiopteris evecta (Mule's foot fern) protein is Cytochrome b6-f complex subunit 8.